A 54-amino-acid polypeptide reads, in one-letter code: Large ribosomal subunit protein bL33B (54 aa).

It belongs to the bacterial ribosomal protein bL33 family.

The protein is Large ribosomal subunit protein bL33B of Saccharopolyspora erythraea (strain ATCC 11635 / DSM 40517 / JCM 4748 / NBRC 13426 / NCIMB 8594 / NRRL 2338).